The following is an 87-amino-acid chain: Small ribosomal subunit protein bS20 (87 aa).

Positions 1 to 22 are disordered; that stretch reads MANSAQARKRARQSVKQRAHNA. Positions 7–19 are enriched in basic residues; sequence ARKRARQSVKQRA.

It belongs to the bacterial ribosomal protein bS20 family.

Functionally, binds directly to 16S ribosomal RNA. In Neisseria gonorrhoeae (strain ATCC 700825 / FA 1090), this protein is Small ribosomal subunit protein bS20.